A 239-amino-acid chain; its full sequence is ATP synthase subunit a (239 aa).

A run of 5 helical transmembrane segments spans residues 27-47 (GQVFLSSWIVIGALLAVVVLG), 86-106 (LPFIGTLFLFIFVSNWGGALI), 125-145 (INTTVAMALLVSLAFFYAGLS), 190-210 (LAVAVLASLVPLLVPLPVMLL), and 211-231 (GLFTSAIQALIFATLAAFYIG).

It belongs to the ATPase A chain family. As to quaternary structure, F-type ATPases have 2 components, CF(1) - the catalytic core - and CF(0) - the membrane proton channel. CF(1) has five subunits: alpha(3), beta(3), gamma(1), delta(1), epsilon(1). CF(0) has four main subunits: a, b, b' and c.

The protein resides in the cellular thylakoid membrane. Functionally, key component of the proton channel; it plays a direct role in the translocation of protons across the membrane. The protein is ATP synthase subunit a of Synechococcus sp. (strain RCC307).